A 585-amino-acid polypeptide reads, in one-letter code: Clathrin heavy chain linker domain-containing protein 1 (585 aa).

Residues 118–239 (QLEAKMRIID…DLRFRHQRLQ (122 aa)) are a coiled coil.

This Rattus norvegicus (Rat) protein is Clathrin heavy chain linker domain-containing protein 1 (Clhc1).